The sequence spans 337 residues: ATP-dependent 6-phosphofructokinase (337 aa).

Gly-11 contributes to the ATP binding site. An ADP-binding site is contributed by 21-25 (RAVVR). Residues 72–73 (RY) and 102–105 (GDGS) each bind ATP. Residue Asp-103 participates in Mg(2+) binding. 125–127 (TID) contributes to the substrate binding site. Asp-127 (proton acceptor) is an active-site residue. Arg-154 is a binding site for ADP. Substrate is bound by residues Arg-162 and 169–171 (MGR). Residues 185–187 (GAD), Lys-212, and 214–216 (KNH) each bind ADP. Substrate is bound by residues Glu-223, Arg-245, and 251 to 254 (HILR).

The protein belongs to the phosphofructokinase type A (PFKA) family. ATP-dependent PFK group I subfamily. Prokaryotic clade 'B1' sub-subfamily. As to quaternary structure, homotetramer. The cofactor is Mg(2+).

It localises to the cytoplasm. It catalyses the reaction beta-D-fructose 6-phosphate + ATP = beta-D-fructose 1,6-bisphosphate + ADP + H(+). It functions in the pathway carbohydrate degradation; glycolysis; D-glyceraldehyde 3-phosphate and glycerone phosphate from D-glucose: step 3/4. Its activity is regulated as follows. Allosterically activated by ADP and other diphosphonucleosides, and allosterically inhibited by phosphoenolpyruvate. Catalyzes the phosphorylation of D-fructose 6-phosphate to fructose 1,6-bisphosphate by ATP, the first committing step of glycolysis. The polypeptide is ATP-dependent 6-phosphofructokinase (Streptococcus pyogenes serotype M4 (strain MGAS10750)).